Reading from the N-terminus, the 312-residue chain is tRNA uridine(34) hydroxylase (312 aa).

The 94-residue stretch at 123–216 (DRDDVVVLDV…YGIEQGGEDF (94 aa)) folds into the Rhodanese domain. C176 (cysteine persulfide intermediate) is an active-site residue.

The protein belongs to the TrhO family.

The enzyme catalyses uridine(34) in tRNA + AH2 + O2 = 5-hydroxyuridine(34) in tRNA + A + H2O. Functionally, catalyzes oxygen-dependent 5-hydroxyuridine (ho5U) modification at position 34 in tRNAs. The polypeptide is tRNA uridine(34) hydroxylase (Cytophaga hutchinsonii (strain ATCC 33406 / DSM 1761 / CIP 103989 / NBRC 15051 / NCIMB 9469 / D465)).